The primary structure comprises 188 residues: HGPRTase-like protein 1 (188 aa).

It belongs to the purine/pyrimidine phosphoribosyltransferase family. Archaeal HPRT subfamily.

In terms of biological role, may catalyze a purine salvage reaction, the substrate is unknown. This Haloquadratum walsbyi (strain DSM 16854 / JCM 12705 / C23) protein is HGPRTase-like protein 1.